The primary structure comprises 473 residues: UDP-N-acetylmuramate--L-alanine ligase (473 aa).

119–125 serves as a coordination point for ATP; the sequence is GTHGKTT.

This sequence belongs to the MurCDEF family.

The protein resides in the cytoplasm. It catalyses the reaction UDP-N-acetyl-alpha-D-muramate + L-alanine + ATP = UDP-N-acetyl-alpha-D-muramoyl-L-alanine + ADP + phosphate + H(+). Its pathway is cell wall biogenesis; peptidoglycan biosynthesis. Its function is as follows. Cell wall formation. The polypeptide is UDP-N-acetylmuramate--L-alanine ligase (Caulobacter vibrioides (strain NA1000 / CB15N) (Caulobacter crescentus)).